Here is a 255-residue protein sequence, read N- to C-terminus: 2,3-dehydroadipyl-CoA hydratase (255 aa).

The protein belongs to the enoyl-CoA hydratase/isomerase family.

The catalysed reaction is a (3S)-3-hydroxyacyl-CoA = a (2E)-enoyl-CoA + H2O. It carries out the reaction a 4-saturated-(3S)-3-hydroxyacyl-CoA = a (3E)-enoyl-CoA + H2O. The protein operates within aromatic compound metabolism; phenylacetate degradation. Catalyzes the reversible conversion of enzymatically produced 2,3-dehydroadipyl-CoA into 3-hydroxyadipyl-CoA. The sequence is that of 2,3-dehydroadipyl-CoA hydratase (paaF) from Escherichia coli (strain K12).